The following is a 1033-amino-acid chain: Isoleucine--tRNA ligase (1033 aa).

The 'HIGH' region signature appears at 47–57 (PTANGLPHVGH). The 'KMSKS' region motif lies at 590-594 (KMSKS). Lys593 provides a ligand contact to ATP.

Belongs to the class-I aminoacyl-tRNA synthetase family. IleS type 2 subfamily. Monomer. Zn(2+) is required as a cofactor.

It localises to the cytoplasm. It catalyses the reaction tRNA(Ile) + L-isoleucine + ATP = L-isoleucyl-tRNA(Ile) + AMP + diphosphate. Catalyzes the attachment of isoleucine to tRNA(Ile). As IleRS can inadvertently accommodate and process structurally similar amino acids such as valine, to avoid such errors it has two additional distinct tRNA(Ile)-dependent editing activities. One activity is designated as 'pretransfer' editing and involves the hydrolysis of activated Val-AMP. The other activity is designated 'posttransfer' editing and involves deacylation of mischarged Val-tRNA(Ile). In Bacillus thuringiensis (strain Al Hakam), this protein is Isoleucine--tRNA ligase.